A 134-amino-acid chain; its full sequence is Tripartite terminase subunit 2 (134 aa).

The protein belongs to the herpesviridae TRM2 protein family. Associates with TRM1 and TRM3 to form the tripartite terminase complex.

It localises to the host nucleus. Functionally, component of the molecular motor that translocates viral genomic DNA in empty capsid during DNA packaging. Forms a tripartite terminase complex together with TRM1 and TRM3 in the host cytoplasm. Once the complex reaches the host nucleus, it interacts with the capsid portal vertex. This portal forms a ring in which genomic DNA is translocated into the capsid. This is Tripartite terminase subunit 2 from Gallus gallus (Chicken).